The chain runs to 300 residues: Cation-efflux pump FieF (300 aa).

4 helical membrane passes run L11–W31, L40–V60, L81–G101, and P114–F134. 2 residues coordinate Zn(2+): D45 and D49. The Zn(2+) site is built by H153 and D157. A run of 2 helical transmembrane segments spans residues S156–T176 and F182–V202.

The protein belongs to the cation diffusion facilitator (CDF) transporter (TC 2.A.4) family. FieF subfamily. As to quaternary structure, homodimer.

It localises to the cell inner membrane. It catalyses the reaction Zn(2+)(in) + H(+)(out) = Zn(2+)(out) + H(+)(in). The catalysed reaction is Cd(2+)(in) + H(+)(out) = Cd(2+)(out) + H(+)(in). The enzyme catalyses Fe(2+)(in) + H(+)(out) = Fe(2+)(out) + H(+)(in). Divalent metal cation transporter which exports Zn(2+), Cd(2+) and possibly Fe(2+). May be involved in zinc and iron detoxification by efflux. In Pectobacterium carotovorum subsp. carotovorum (strain PC1), this protein is Cation-efflux pump FieF.